Here is a 103-residue protein sequence, read N- to C-terminus: Large ribosomal subunit protein uL23 (103 aa).

It belongs to the universal ribosomal protein uL23 family. Part of the 50S ribosomal subunit. Contacts protein L29, and trigger factor when it is bound to the ribosome.

Functionally, one of the early assembly proteins it binds 23S rRNA. One of the proteins that surrounds the polypeptide exit tunnel on the outside of the ribosome. Forms the main docking site for trigger factor binding to the ribosome. The polypeptide is Large ribosomal subunit protein uL23 (Zymomonas mobilis subsp. mobilis (strain ATCC 31821 / ZM4 / CP4)).